Reading from the N-terminus, the 566-residue chain is Autophagy-related protein 22-1 (566 aa).

Residues 38–58 (YPIAAEVFAVVAVGAFLPVIL) form a helical membrane-spanning segment. The N-linked (GlcNAc...) asparagine glycan is linked to Asn-103. 3 helical membrane passes run 110–130 (SFAMYTFSAAVIVQAVTLVCF), 146–168 (AFAYTGSVASALFIFISPTVYFL), and 179–199 (SLGCSFVLLNAFLPLLVANHA). Asn-200 is a glycosylation site (N-linked (GlcNAc...) asparagine). The next 8 helical transmembrane spans lie at 242–262 (GYGYMAAVFVQVISILILWLF), 278–298 (VILLLVGMWWAALTTPTLLWL), 351–371 (FLISWFLLSDAVATISGTAVL), 382–402 (IAIALLSITSIGSGIIGAFAW), 416–436 (ILLCCVAGMEMIPLYGLLGFI), 451–471 (WEIYPVAVLHGIVMGGVSSYA), 488–510 (FALYAVTDKGSSAFGPALVGWLV), and 519–539 (AFIFLAVLVVLPAPLLWMLDV). Residues 547–566 (KAMADGEGRGRGTYERVREE) form a disordered region.

This sequence belongs to the ATG22 family.

It is found in the vacuole membrane. Functionally, vacuolar effluxer which mediate the efflux of amino acids resulting from autophagic degradation. The release of autophagic amino acids allows the maintenance of protein synthesis and viability during nitrogen starvation. In Phaeosphaeria nodorum (strain SN15 / ATCC MYA-4574 / FGSC 10173) (Glume blotch fungus), this protein is Autophagy-related protein 22-1 (ATG22-1).